The primary structure comprises 103 residues: Small ribosomal subunit protein uS10 (103 aa).

Belongs to the universal ribosomal protein uS10 family. As to quaternary structure, part of the 30S ribosomal subunit.

Functionally, involved in the binding of tRNA to the ribosomes. The polypeptide is Small ribosomal subunit protein uS10 (Cutibacterium acnes (strain DSM 16379 / KPA171202) (Propionibacterium acnes)).